A 492-amino-acid chain; its full sequence is Excitatory amino acid transporter (492 aa).

Topologically, residues Met1–Lys7 are cytoplasmic. 3 consecutive transmembrane segments (helical) span residues Asn8–Leu28, Leu47–Gly67, and Thr85–Ile105. The Extracellular segment spans residues His106–Gly191. N-linked (GlcNAc...) asparagine glycans are attached at residues Asn166 and Asn176. A run of 5 helical transmembrane segments spans residues Met192–Gly212, Val228–Ile248, Val270–Val290, Ala358–Val378, and Ile389–Val409.

This sequence belongs to the dicarboxylate/amino acid:cation symporter (DAACS) (TC 2.A.23) family.

The protein resides in the membrane. In terms of biological role, transports L-glutamate and also L- and D-aspartate. Essential for terminating the postsynaptic action of glutamate by rapidly removing released glutamate from the synaptic cleft. Acts as a symport by cotransporting sodium. This Onchocerca volvulus protein is Excitatory amino acid transporter (GLT-1).